The chain runs to 367 residues: MVTRRRSKKKKKTKRKKQSSKEKEKYQTFINLPCDLLQLVISRLPLKDNIRASAVCKTWHEACVSLRVIHTSPWLIYFSKTDDSYELYDPSMQKNCNLHFPELSGFRVCYSKDGWLLMYNPNSYQLLFFNPFTRDCVPMPTLWMAYDQRMAFSCAPTSTSCLLFTVTSVTWNYITIKTYFANAKEWKTSVFKNRLQRNFNTFEQIVFSNGVFYCLTNTGCLALFDPSLNYWNVLPGRPPKRPGSNGCFMTEHQGEIFLIYMYRHMNPTVLKLDLTSFEWAERKTLGGLTIYASALSSESRAEQQKQSGIWNCLCLSVFHGFKRTCIYYKVDEESEVCFKWKKQNPYENIWIMPPLNLIDLPLFDHRI.

A compositionally biased stretch (basic residues) spans 1–18 (MVTRRRSKKKKKTKRKKQ). The interval 1–24 (MVTRRRSKKKKKTKRKKQSSKEKE) is disordered. An F-box domain is found at 26-81 (YQTFINLPCDLLQLVISRLPLKDNIRASAVCKTWHEACVSLRVIHTSPWLIYFSKT).

This is F-box protein At3g56470 from Arabidopsis thaliana (Mouse-ear cress).